Here is a 232-residue protein sequence, read N- to C-terminus: Phosphatidylserine decarboxylase proenzyme (232 aa).

The Schiff-base intermediate with substrate; via pyruvic acid role is filled by S190. S190 bears the Pyruvic acid (Ser); by autocatalysis mark.

This sequence belongs to the phosphatidylserine decarboxylase family. PSD-A subfamily. In terms of assembly, heterodimer of a large membrane-associated beta subunit and a small pyruvoyl-containing alpha subunit. The cofactor is pyruvate. Is synthesized initially as an inactive proenzyme. Formation of the active enzyme involves a self-maturation process in which the active site pyruvoyl group is generated from an internal serine residue via an autocatalytic post-translational modification. Two non-identical subunits are generated from the proenzyme in this reaction, and the pyruvate is formed at the N-terminus of the alpha chain, which is derived from the carboxyl end of the proenzyme. The post-translation cleavage follows an unusual pathway, termed non-hydrolytic serinolysis, in which the side chain hydroxyl group of the serine supplies its oxygen atom to form the C-terminus of the beta chain, while the remainder of the serine residue undergoes an oxidative deamination to produce ammonia and the pyruvoyl prosthetic group on the alpha chain.

Its subcellular location is the cell membrane. It catalyses the reaction a 1,2-diacyl-sn-glycero-3-phospho-L-serine + H(+) = a 1,2-diacyl-sn-glycero-3-phosphoethanolamine + CO2. It functions in the pathway phospholipid metabolism; phosphatidylethanolamine biosynthesis; phosphatidylethanolamine from CDP-diacylglycerol: step 2/2. Functionally, catalyzes the formation of phosphatidylethanolamine (PtdEtn) from phosphatidylserine (PtdSer). The sequence is that of Phosphatidylserine decarboxylase proenzyme from Brucella anthropi (strain ATCC 49188 / DSM 6882 / CCUG 24695 / JCM 21032 / LMG 3331 / NBRC 15819 / NCTC 12168 / Alc 37) (Ochrobactrum anthropi).